The sequence spans 436 residues: WD repeat domain phosphoinositide-interacting protein 2 (436 aa).

The WD 1 repeat unit spans residues 182-222; that stretch reads AHDSPLAALAFDASGTKLATASEKGTVIRVFSIPEGQKLFE. The short motif at 223 to 226 is the L/FRRG motif element; it reads FRRG. WD repeat units follow at residues 228 to 267 and 311 to 349; these read KRCV…EKPQ and GHKN…GGEC.

It belongs to the WD repeat PROPPIN family.

The protein resides in the preautophagosomal structure membrane. In terms of biological role, component of the autophagy machinery that controls the major intracellular degradation process by which cytoplasmic materials are packaged into autophagosomes and delivered to lysosomes for degradation. Involved in an early step of the formation of preautophagosomal structures. In Gallus gallus (Chicken), this protein is WD repeat domain phosphoinositide-interacting protein 2 (WIPI2).